The sequence spans 499 residues: MKIKFFIKRTLIFIFILVTFLTYIHGYNEPWYKNAIFYEVFVRSFADSDGDRVGDLNGLIDKLDYFKNLNITALWLMPIFPSVSYHGYDVTDYYDIHPGYGTMEDFENLIRKAHEKNIKIILDLVVNHTSSRHPWFVSSASSYNSPYRDYYIWSTEKPEKNSNLWYKKPTGYYYALFWSEMPDLNFDNPKVREEVKKIAKFWIEKGVDGFRLDAAKHIYDDDSKNIQWWKEFYSYLKSIKPDVYLVGEVWDNEYKIAEYYKGLPSNFNFPLSDKIMNSVANQKDLGIIEFLEFERELFGENNTDFADAIFLRNHDQVRVRTFFGGSIDKSILAGSIYLTLPGIPFIYYGEEIGMEGSKPDEYIREPFKWTDDMKSKYQTYWIIPRYNLPGNGIALDTEEKDPNSIYNHYKKLLEIRVKCRALSNGKIERIKTQDRSILAYKLELEDEKIMVVHNLNRIENTFNFNNEIKEKDILYIRNAKTEKNKIILGPYSTVIVKIP.

Residues asparagine 127 and aspartate 183 each coordinate Ca(2+). The active-site Nucleophile is the aspartate 213. Histidine 217 is a Ca(2+) binding site. Glutamate 248 serves as the catalytic Proton donor.

The protein belongs to the glycosyl hydrolase 13 family. Monomer. Ca(2+) is required as a cofactor.

The protein localises to the cytoplasm. The catalysed reaction is Endohydrolysis of (1-&gt;4)-alpha-D-glucosidic linkages in polysaccharides containing three or more (1-&gt;4)-alpha-linked D-glucose units.. The sequence is that of Alpha-amylase 3 (amyC) from Dictyoglomus thermophilum (strain ATCC 35947 / DSM 3960 / H-6-12).